The primary structure comprises 195 residues: Probable GTP-binding protein EngB (195 aa).

Positions 22–195 (GYPEIALVGR…WKWIEDRMGE (174 aa)) constitute an EngB-type G domain. Residues 30–37 (GRSNVGKS), 57–61 (GKTQT), 75–78 (DVPG), 142–145 (TKSD), and 173–176 (MFSA) contribute to the GTP site. 2 residues coordinate Mg(2+): Ser37 and Thr59.

Belongs to the TRAFAC class TrmE-Era-EngA-EngB-Septin-like GTPase superfamily. EngB GTPase family. Mg(2+) serves as cofactor.

Functionally, necessary for normal cell division and for the maintenance of normal septation. The protein is Probable GTP-binding protein EngB of Pediococcus pentosaceus (strain ATCC 25745 / CCUG 21536 / LMG 10740 / 183-1w).